The following is a 315-amino-acid chain: Acetyl-coenzyme A carboxylase carboxyl transferase subunit beta, chloroplastic (315 aa).

The CoA carboxyltransferase N-terminal domain occupies 47-315; sequence LWTRCDSCEN…VYKESNSYLF (269 aa). 4 residues coordinate Zn(2+): Cys-51, Cys-54, Cys-70, and Cys-73. Residues 51-73 form a C4-type zinc finger; the sequence is CDSCENMLYVRFLKQNKRICEEC.

The protein belongs to the AccD/PCCB family. Acetyl-CoA carboxylase is a heterohexamer composed of biotin carboxyl carrier protein, biotin carboxylase and 2 subunits each of ACCase subunit alpha and ACCase plastid-coded subunit beta (accD). The cofactor is Zn(2+).

Its subcellular location is the plastid. It is found in the chloroplast stroma. The enzyme catalyses N(6)-carboxybiotinyl-L-lysyl-[protein] + acetyl-CoA = N(6)-biotinyl-L-lysyl-[protein] + malonyl-CoA. It participates in lipid metabolism; malonyl-CoA biosynthesis; malonyl-CoA from acetyl-CoA: step 1/1. In terms of biological role, component of the acetyl coenzyme A carboxylase (ACC) complex. Biotin carboxylase (BC) catalyzes the carboxylation of biotin on its carrier protein (BCCP) and then the CO(2) group is transferred by the transcarboxylase to acetyl-CoA to form malonyl-CoA. This Physcomitrium patens (Spreading-leaved earth moss) protein is Acetyl-coenzyme A carboxylase carboxyl transferase subunit beta, chloroplastic.